The following is a 485-amino-acid chain: Glutamyl-tRNA(Gln) amidotransferase subunit A (485 aa).

Active-site charge relay system residues include lysine 78 and serine 153. Serine 177 acts as the Acyl-ester intermediate in catalysis.

It belongs to the amidase family. GatA subfamily. In terms of assembly, heterotrimer of A, B and C subunits.

It catalyses the reaction L-glutamyl-tRNA(Gln) + L-glutamine + ATP + H2O = L-glutaminyl-tRNA(Gln) + L-glutamate + ADP + phosphate + H(+). Its function is as follows. Allows the formation of correctly charged Gln-tRNA(Gln) through the transamidation of misacylated Glu-tRNA(Gln) in organisms which lack glutaminyl-tRNA synthetase. The reaction takes place in the presence of glutamine and ATP through an activated gamma-phospho-Glu-tRNA(Gln). The protein is Glutamyl-tRNA(Gln) amidotransferase subunit A of Bacillus anthracis (strain A0248).